Reading from the N-terminus, the 341-residue chain is Nucleoid-associated protein Sden_2335 (341 aa).

This sequence belongs to the YejK family.

The protein resides in the cytoplasm. It localises to the nucleoid. This is Nucleoid-associated protein Sden_2335 from Shewanella denitrificans (strain OS217 / ATCC BAA-1090 / DSM 15013).